A 270-amino-acid polypeptide reads, in one-letter code: MATVPEPTSEMMSYYYSDNENDLFFEADGPRKMKCCFQDLNNSSLKDEGIQLHISHQLQNKSLRHFVSVVVALEKLKKISLPCSQPLQDDDLKNVFCCIFEEEPIVCEVYDDDAFVCDAPLQSLDCKFRDKNQKSLVLYNSYELRALHLNGSSVNQQAVFRMSFLQGDENSNKIPVALCIKEKNLYLSCVMKDGKPTLQLEMLDPRVYPKKKMEKRFVFNKTEVKKILEFESSQFPNWYISTSKAEAMPVFLGNTKGGQDITDFTMEFSS.

Residues 1–118 (MATVPEPTSE…VYDDDAFVCD (118 aa)) constitute a propeptide that is removed on maturation.

It belongs to the IL-1 family. As to quaternary structure, monomer. In its precursor form, weakly interacts with full-length MEFV; the mature cytokine does not interact at all. Interacts with integrins ITGAV:ITGBV and ITGA5:ITGB1; integrin-binding is required for IL1B signaling. Interacts with cargo receptor TMED10; the interaction is direct and is required for the secretion of IL1B mature form. Interacts with HSP90AB1; the interaction facilitates cargo translocation into the ERGIC. Interacts with HSP90B1; the interaction facilitates cargo translocation into the ERGIC.

The protein localises to the cytoplasm. Its subcellular location is the cytosol. It localises to the secreted. It is found in the lysosome. The protein resides in the extracellular exosome. In terms of biological role, potent pro-inflammatory cytokine. Initially discovered as the major endogenous pyrogen, induces prostaglandin synthesis, neutrophil influx and activation, T-cell activation and cytokine production, B-cell activation and antibody production, and fibroblast proliferation and collagen production. Promotes Th17 differentiation of T-cells. Synergizes with IL12/interleukin-12 to induce IFNG synthesis from T-helper 1 (Th1) cells. Plays a role in angiogenesis by inducing VEGF production synergistically with TNF and IL6. Involved in transduction of inflammation downstream of pyroptosis: its mature form is specifically released in the extracellular milieu by passing through the gasdermin-D (GSDMD) pore. This chain is Interleukin-1 beta (IL1B), found in Phoca vitulina richardii (Pacific harbor seal).